A 111-amino-acid chain; its full sequence is Ribosome-binding factor A (111 aa).

It belongs to the RbfA family. Monomer. Binds 30S ribosomal subunits, but not 50S ribosomal subunits or 70S ribosomes.

The protein resides in the cytoplasm. Its function is as follows. One of several proteins that assist in the late maturation steps of the functional core of the 30S ribosomal subunit. Associates with free 30S ribosomal subunits (but not with 30S subunits that are part of 70S ribosomes or polysomes). Required for efficient processing of 16S rRNA. May interact with the 5'-terminal helix region of 16S rRNA. This chain is Ribosome-binding factor A, found in Helicobacter acinonychis (strain Sheeba).